Consider the following 524-residue polypeptide: N-acetylgalactosamine-6-sulfatase (524 aa).

The first 27 residues, 1-27 (MTACSTAIRAQQLLLPVLSALGLLAAG), serve as a signal peptide directing secretion. The catalytic domain stretch occupies residues 28–381 (APQPPNIVLL…PTMLQGHIID (354 aa)). 3 residues coordinate Ca(2+): aspartate 40, aspartate 41, and cysteine 80. Residue cysteine 80 is the Nucleophile of the active site. Cysteine 80 carries the 3-oxoalanine (Cys) modification. Residue histidine 143 is part of the active site. Residue asparagine 205 is glycosylated (N-linked (GlcNAc...) asparagine). Ca(2+) is bound by residues aspartate 290 and asparagine 291. An intrachain disulfide couples cysteine 310 to cysteine 421. Asparagine 425 carries N-linked (GlcNAc...) asparagine glycosylation. Intrachain disulfides connect cysteine 491-cysteine 520 and cysteine 503-cysteine 509.

This sequence belongs to the sulfatase family. In terms of assembly, homodimer. Ca(2+) serves as cofactor. The conversion to 3-oxoalanine (also known as C-formylglycine, FGly), of a serine or cysteine residue in prokaryotes and of a cysteine residue in eukaryotes, is critical for catalytic activity.

It is found in the lysosome. The catalysed reaction is Hydrolysis of the 6-sulfate groups of the N-acetyl-D-galactosamine 6-sulfate units of chondroitin sulfate and of the D-galactose 6-sulfate units of keratan sulfate.. This is N-acetylgalactosamine-6-sulfatase (Galns) from Rattus norvegicus (Rat).